The sequence spans 265 residues: uncharacterized protein (265 aa).

2 CBS domains span residues Met9–Glu64 and Met67–Lys126.

This is an uncharacterized protein from Methanocaldococcus jannaschii (strain ATCC 43067 / DSM 2661 / JAL-1 / JCM 10045 / NBRC 100440) (Methanococcus jannaschii).